The sequence spans 173 residues: Oleosin 18.5 kDa (173 aa).

Residues 1 to 45 (MADTARGTHHDIIGRDQYPMMGRDRDQYQMSGRGSDYSKSRQIAK) form a polar region. Residues 46 to 117 (AATAVTAGGS…AAITVFSWIY (72 aa)) are hydrophobic. The next 3 helical transmembrane spans lie at 54–74 (GSLL…LTVA), 76–96 (PLLV…ALLI), and 97–117 (TGFL…SWIY). A disordered region spans residues 151–173 (YYGQQHTGGEHDRDRTRGGQHTT). Positions 158–167 (GGEHDRDRTR) are enriched in basic and acidic residues.

It belongs to the oleosin family.

Its subcellular location is the lipid droplet. It localises to the membrane. Functionally, may have a structural role to stabilize the lipid body during desiccation of the seed by preventing coalescence of the oil. Probably interacts with both lipid and phospholipid moieties of lipid bodies. May also provide recognition signals for specific lipase anchorage in lipolysis during seedling growth. This is Oleosin 18.5 kDa from Arabidopsis thaliana (Mouse-ear cress).